The primary structure comprises 630 residues: tRNA uridine 5-carboxymethylaminomethyl modification enzyme MnmG (630 aa).

13 to 18 (GGGHAG) lines the FAD pocket. 273–287 (GPRYCPSIEDKIHRF) serves as a coordination point for NAD(+).

This sequence belongs to the MnmG family. Homodimer. Heterotetramer of two MnmE and two MnmG subunits. The cofactor is FAD.

It is found in the cytoplasm. Functionally, NAD-binding protein involved in the addition of a carboxymethylaminomethyl (cmnm) group at the wobble position (U34) of certain tRNAs, forming tRNA-cmnm(5)s(2)U34. This is tRNA uridine 5-carboxymethylaminomethyl modification enzyme MnmG from Pseudomonas putida (strain GB-1).